The sequence spans 279 residues: Acetylglutamate kinase (279 aa).

Substrate-binding positions include 62–63, arginine 84, and asparagine 177; that span reads GG.

It belongs to the acetylglutamate kinase family. ArgB subfamily.

The protein localises to the cytoplasm. The catalysed reaction is N-acetyl-L-glutamate + ATP = N-acetyl-L-glutamyl 5-phosphate + ADP. The protein operates within amino-acid biosynthesis; L-arginine biosynthesis; N(2)-acetyl-L-ornithine from L-glutamate: step 2/4. Functionally, catalyzes the ATP-dependent phosphorylation of N-acetyl-L-glutamate. The protein is Acetylglutamate kinase of Pseudothermotoga lettingae (strain ATCC BAA-301 / DSM 14385 / NBRC 107922 / TMO) (Thermotoga lettingae).